Consider the following 132-residue polypeptide: Prefoldin subunit alpha (132 aa).

This sequence belongs to the prefoldin subunit alpha family. As to quaternary structure, heterohexamer of two alpha and four beta subunits.

It is found in the cytoplasm. Molecular chaperone capable of stabilizing a range of proteins. Seems to fulfill an ATP-independent, HSP70-like function in archaeal de novo protein folding. The chain is Prefoldin subunit alpha (pfdA) from Pyrobaculum aerophilum (strain ATCC 51768 / DSM 7523 / JCM 9630 / CIP 104966 / NBRC 100827 / IM2).